The chain runs to 427 residues: Hydroxylamine reductase (427 aa).

[4Fe-4S] cluster-binding residues include Cys3, Cys6, Cys15, and Cys21. 8 residues coordinate hybrid [4Fe-2O-2S] cluster: His129, Glu153, Cys197, Cys283, Cys311, Cys336, Glu370, and Lys372. Residue Cys283 is modified to Cysteine persulfide.

Belongs to the HCP family. Requires [4Fe-4S] cluster as cofactor. It depends on hybrid [4Fe-2O-2S] cluster as a cofactor.

Its subcellular location is the cytoplasm. It carries out the reaction A + NH4(+) + H2O = hydroxylamine + AH2 + H(+). Functionally, catalyzes the reduction of hydroxylamine to form NH(3) and H(2)O. In Moorella thermoacetica (strain ATCC 39073 / JCM 9320), this protein is Hydroxylamine reductase.